A 1960-amino-acid chain; its full sequence is Myosin-9 (1960 aa).

Position 2 is an N-acetylalanine (Ala-2). Residues 2–838 form a mediates interaction with LIMCH1 region; sequence AQQAADKYLY…RLFTKVKPLL (837 aa). The residue at position 8 (Lys-8) is an N6-acetyllysine. At Tyr-11 the chain carries Phosphotyrosine. Residues 27–77 enclose the Myosin N-terminal SH3-like domain; that stretch reads AAKKLVWVPSDKSGFEPASLKEEVGEEAIVELVENGKKVKVNKDDIQKMNP. The 696-residue stretch at 81-776 folds into the Myosin motor domain; sequence SKVEDMAELT…VLAHLEEERD (696 aa). An N6-acetyllysine modification is found at Lys-102. An ATP-binding site is contributed by 174–181; sequence GESGAGKT. An N6-acetyllysine mark is found at Lys-299, Lys-435, and Lys-613. Residue Ser-628 is modified to Phosphoserine. Residues 654–676 are actin-binding; it reads LAKLMATLRNTNPNFVRCIIPNH. Phosphotyrosine is present on Tyr-754. The 30-residue stretch at 779-808 folds into the IQ domain; sequence ITDVIIGFQACCRGYLARKAFAKRQQQLTA. Residues 837 to 1926 adopt a coiled-coil conformation; it reads LLQVSRQEEE…LKNKLRRGDL (1090 aa). At Lys-850 the chain carries N6-succinyllysine. An N6-acetyllysine mark is found at Lys-860, Lys-975, and Lys-1024. Ser-1114 bears the Phosphoserine mark. Positions 1117–1137 are disordered; that stretch reads QEDLESERASRNKAEKQKRDL. The span at 1122 to 1137 shows a compositional bias: basic and acidic residues; that stretch reads SERASRNKAEKQKRDL. Residues Lys-1234, Lys-1249, Lys-1357, Lys-1392, Lys-1404, Lys-1410, Lys-1459, and Lys-1638 each carry the N6-acetyllysine modification. Position 1669 is an N6-succinyllysine (Lys-1669). Residue Ser-1714 is modified to Phosphoserine. N6-acetyllysine is present on residues Lys-1793, Lys-1802, and Lys-1845. Residues 1877–1918 form a disordered region; the sequence is RQLEEAEEEAQRANASRRKLQRELEDATETADAMNREVSSLK. The residue at position 1923 (Arg-1923) is an Omega-N-methylarginine. The tract at residues 1934–1960 is disordered; the sequence is VARKGAGDCSDEEVDGKADGAEAKAAE. A Phosphoserine modification is found at Ser-1943. Residues 1948–1960 show a composition bias toward basic and acidic residues; sequence DGKADGAEAKAAE.

It belongs to the TRAFAC class myosin-kinesin ATPase superfamily. Myosin family. In terms of assembly, myosin is a hexameric protein that consists of 2 heavy chain subunits (MHC), 2 alkali light chain subunits (MLC) and 2 regulatory light chain subunits (MLC-2). Interacts with RASIP1. Interacts with DDR1. Interacts with PDLIM2. Interacts with SVIL. Interacts with HTRA3. Interacts with Myo7a. Interacts with CFAP95. Interacts with LIMCH1; independently of the integration of MYH9 into the myosin complex. Interacts with RAB3A. Interacts with ZBED4. Interacts with S100A4; this interaction increases cell motility. Post-translationally, ISGylated. In terms of processing, ubiquitination.

It is found in the cytoplasm. The protein resides in the cytoskeleton. Its subcellular location is the cell cortex. It localises to the cytoplasmic vesicle. The protein localises to the secretory vesicle. It is found in the cortical granule. Functionally, cellular myosin that appears to play a role in cytokinesis, cell shape, and specialized functions such as secretion and capping. Required for cortical actin clearance prior to oocyte exocytosis. Promotes cell motility in conjunction with S100A4. During cell spreading, plays an important role in cytoskeleton reorganization, focal contact formation (in the margins but not the central part of spreading cells), and lamellipodial retraction; this function is mechanically antagonized by MYH10. This is Myosin-9 (MYH9) from Canis lupus familiaris (Dog).